Consider the following 303-residue polypeptide: Archaeosortase A (303 aa).

Transmembrane regions (helical) follow at residues 3 to 23 (GLLS…GAVA), 36 to 56 (TAAW…FTLV), 60 to 80 (YIEG…GWLL), 93 to 113 (AVAA…FTLL), 169 to 189 (VVLA…IAAV), 200 to 220 (LAIA…FIAI), and 259 to 279 (LAVV…PELL). Cysteine 173 serves as the catalytic Acyl-thioester intermediate. The Proton donor role is filled by arginine 214.

Belongs to the exosortase/archaeosortase family. Archaeosortase A subfamily.

It is found in the cell membrane. In terms of biological role, transpeptidase that recognizes and modifies its substrate by proteolytic cleavage of a sorting signal. Following cleavage, a covalent intermediate is formed via a thioester bond between the archaeosortase and its substrate, which is then transferred and covalently attached to the cell membrane. This sortase recognizes a tripartite structure consisting of a conserved Pro-Gly-Phe (PGF) motif, followed by a transmembrane alpha helix domain and a cluster of basic residues, usually at the C-terminus of target proteins. Confirmed substrates include the cell surface S-layer glycoprotein Csg and HVO_0405. ArtA is required for the C-terminal processing of Csg and for its lipidation and attachment to the archaeal plasma membrane. It is also required for the processing of HVO_0405, which contains an atypical central tripartite structure. The sequence is that of Archaeosortase A from Haloferax volcanii (strain ATCC 29605 / DSM 3757 / JCM 8879 / NBRC 14742 / NCIMB 2012 / VKM B-1768 / DS2) (Halobacterium volcanii).